The primary structure comprises 545 residues: Myotubularin-related protein 9 (545 aa).

Residue methionine 1 is modified to N-acetylmethionine. A GRAM domain is found at 4 to 99 (AELIKTPRVD…LNIASSIEAL (96 aa)). Residues 123–498 (GWHSFLPEQE…QSLQLWEGIF (376 aa)) form the Myotubularin phosphatase domain. Positions 508–542 (LDEAYEEMVNIIEYNKELQAKVNVLRRQLAELETE) form a coiled coil.

Belongs to the protein-tyrosine phosphatase family. Non-receptor class myotubularin subfamily. As to quaternary structure, homodimer. Heterodimer (via C-terminus) with lipid phosphatase MTMR6 (via C-terminus). Heterodimer (via coiled coil domain) with lipid phosphatase MTMR7 (via C-terminus).

The protein localises to the cytoplasm. It is found in the cell projection. The protein resides in the ruffle membrane. Its subcellular location is the perinuclear region. It localises to the endoplasmic reticulum. Functionally, acts as an adapter for myotubularin-related phosphatases. Increases lipid phosphatase MTMR6 catalytic activity, specifically towards phosphatidylinositol 3,5-bisphosphate, and MTMR6 binding affinity for phosphorylated phosphatidylinositols. Positively regulates lipid phosphatase MTMR7 catalytic activity. The formation of the MTMR6-MTMR9 complex, stabilizes both MTMR6 and MTMR9 protein levels. Plays a role in the late stages of macropinocytosis possibly by regulating MTMR6-mediated dephosphorylation of phosphatidylinositol 3-phosphate in membrane ruffles. Negatively regulates DNA damage-induced apoptosis, in part via its association with MTMR6. Does not bind mono-, di- and tri-phosphorylated phosphatidylinositols, phosphatidic acid and phosphatidylserine. The polypeptide is Myotubularin-related protein 9 (Mtmr9) (Mus musculus (Mouse)).